A 954-amino-acid polypeptide reads, in one-letter code: Bifunctional glutamine synthetase adenylyltransferase/adenylyl-removing enzyme (954 aa).

The segment at 1-450 (MENISNKPLS…HFIETVGGRT (450 aa)) is adenylyl removase. The segment at 454 to 954 (GADLWTQQLW…MDIYQRILVD (501 aa)) is adenylyl transferase.

It belongs to the GlnE family. Mg(2+) is required as a cofactor.

It carries out the reaction [glutamine synthetase]-O(4)-(5'-adenylyl)-L-tyrosine + phosphate = [glutamine synthetase]-L-tyrosine + ADP. The enzyme catalyses [glutamine synthetase]-L-tyrosine + ATP = [glutamine synthetase]-O(4)-(5'-adenylyl)-L-tyrosine + diphosphate. Involved in the regulation of glutamine synthetase GlnA, a key enzyme in the process to assimilate ammonia. When cellular nitrogen levels are high, the C-terminal adenylyl transferase (AT) inactivates GlnA by covalent transfer of an adenylyl group from ATP to specific tyrosine residue of GlnA, thus reducing its activity. Conversely, when nitrogen levels are low, the N-terminal adenylyl removase (AR) activates GlnA by removing the adenylyl group by phosphorolysis, increasing its activity. The regulatory region of GlnE binds the signal transduction protein PII (GlnB) which indicates the nitrogen status of the cell. The protein is Bifunctional glutamine synthetase adenylyltransferase/adenylyl-removing enzyme of Shewanella woodyi (strain ATCC 51908 / MS32).